Here is a 121-residue protein sequence, read N- to C-terminus: Succinate dehydrogenase assembly factor 3, mitochondrial (121 aa).

The transit peptide at 1-35 directs the protein to the mitochondrion; it reads MRPSLVRLVRPRRPERKTSPILPPLKLYKALLRAH.

It belongs to the complex I LYR family. SDHAF3 subfamily. In terms of assembly, interacts with the iron-sulfur protein subunit within the SDH catalytic dimer.

It localises to the mitochondrion matrix. In terms of biological role, plays an essential role in the assembly of succinate dehydrogenase (SDH), an enzyme complex (also referred to as respiratory complex II) that is a component of both the tricarboxylic acid (TCA) cycle and the mitochondrial electron transport chain, and which couples the oxidation of succinate to fumarate with the reduction of ubiquinone (coenzyme Q) to ubiquinol. Promotes maturation of the iron-sulfur protein subunit of the SDH catalytic dimer, protecting it from the deleterious effects of oxidants. May act together with SDHAF1. This is Succinate dehydrogenase assembly factor 3, mitochondrial from Debaryomyces hansenii (strain ATCC 36239 / CBS 767 / BCRC 21394 / JCM 1990 / NBRC 0083 / IGC 2968) (Yeast).